A 333-amino-acid polypeptide reads, in one-letter code: GDP-mannose transporter GONST1 (333 aa).

A run of 9 helical transmembrane segments spans residues Ala-33 to Leu-55, Ala-62 to Met-84, Val-99 to Ile-121, Val-153 to Thr-170, Phe-174 to Leu-196, Ser-216 to Glu-238, Phe-253 to Leu-275, Thr-282 to Val-304, and Leu-308 to Ala-325.

This sequence belongs to the nucleotide-sugar transporter family. GDP-Mannose:GMP antiporter (GMA) (TC 2.A.7.13) subfamily.

Its subcellular location is the golgi apparatus membrane. Involved in the import of GDP-mannose from the cytoplasm into the Golgi lumen. Required for the luminal synthesis of a variety of plant cell surface components. Is required for the correct mannosylation of the glycosylinositol phosphoceramides (GIPC). Can indifferently transport GDP-mannose, GDP-Glucose, GDP-Fucose or GDP-Galactose in vitro. This chain is GDP-mannose transporter GONST1, found in Arabidopsis thaliana (Mouse-ear cress).